A 97-amino-acid polypeptide reads, in one-letter code: Co-chaperonin GroES (97 aa).

Belongs to the GroES chaperonin family. In terms of assembly, heptamer of 7 subunits arranged in a ring. Interacts with the chaperonin GroEL.

It is found in the cytoplasm. In terms of biological role, together with the chaperonin GroEL, plays an essential role in assisting protein folding. The GroEL-GroES system forms a nano-cage that allows encapsulation of the non-native substrate proteins and provides a physical environment optimized to promote and accelerate protein folding. GroES binds to the apical surface of the GroEL ring, thereby capping the opening of the GroEL channel. The protein is Co-chaperonin GroES of Pseudomonas putida (Arthrobacter siderocapsulatus).